The chain runs to 286 residues: MAGAKEIKTKIASVKNTQKITSAMEMVAASKMRRAQERMAASRPYAESMRKVIGHVAQGSLEFKHPYLEVREAKRVGYIVVATDRGLCGGLNVNLFKKVTLDVKNWKAQGAEVEFCPIGARSVQFFKSFGGQVSAHASGLGDAPKLADLIGTVRVMLQAYNEGKLDRLYVVFNKFVNTMAQTPVIEQLLPLPKSADDVKTNRWDYIYEPDPKEILETLLVRYVESQVYQGVIENLASEQAARMVAMKAATDNAGDMIDGLQLVYNKARQAAITQELSEIVSGASAV.

This sequence belongs to the ATPase gamma chain family. As to quaternary structure, F-type ATPases have 2 components, CF(1) - the catalytic core - and CF(0) - the membrane proton channel. CF(1) has five subunits: alpha(3), beta(3), gamma(1), delta(1), epsilon(1). CF(0) has three main subunits: a, b and c.

Its subcellular location is the cell inner membrane. Functionally, produces ATP from ADP in the presence of a proton gradient across the membrane. The gamma chain is believed to be important in regulating ATPase activity and the flow of protons through the CF(0) complex. The protein is ATP synthase gamma chain of Shewanella denitrificans (strain OS217 / ATCC BAA-1090 / DSM 15013).